The primary structure comprises 328 residues: Protein FAM76B (328 aa).

A disordered region spans residues 143–232; sequence KEQRKGLGSS…ITQSMDSGGT (90 aa). Positions 148-159 are enriched in low complexity; sequence GLGSSHSNSSSL. The segment covering 165–183 has biased composition (basic residues); that stretch reads QRHHHHHQHHRHGSSHHKI. Positions 185 to 201 are enriched in polar residues; sequence GNLSPEQDQGLWKQSIQ. Ser-188 carries the post-translational modification Phosphoserine. A compositionally biased stretch (basic and acidic residues) spans 203–213; it reads ETPKKKPKLET. The span at 216 to 232 shows a compositional bias: polar residues; that stretch reads SNGDSSSITQSMDSGGT. Positions 237-316 form a coiled coil; it reads LISQLKEEVM…KQVAALSKGK (80 aa).

This sequence belongs to the FAM76 family. As to expression, highly expressed in hematopoietic and immune systems including in the thymus, spleen, kidney, and blood vessel.

Its function is as follows. Plays a role in hematopoiesis and immune system development, and participates in the inflammatory response. The chain is Protein FAM76B (fam76b) from Danio rerio (Zebrafish).